The chain runs to 506 residues: MLFLSFYAGSWESWICCCCVIPVDRPWDRGRRWQLEMADTRSVYETRFEAAVKVIQSLPKNGSFQPTNEMMLRFYSFYKQATEGPCKLSRPGFWDPIGRYKWDAWSSLGDMTKEEAMIAYVEEMKKIIETMPMTEKVEELLHVIGPFYEIVEDKKNSKSSDLTSDLGNVLTSSNAKAVNGKAESSDSGAESEEEEAQEELKGAEQSGSDDKKMMTKSTDKNLEIIVTNGYKDSFAQDSDIHTDSSRSARRSEDKKPTDQSSQQTGNTVLCVHQDTNEDPGEDASGVHHLTSDSDSEVYCDSMEQFGQEEYYLGGDPAQHLEGSGFCEDAQLSPGNGSIGKMQMRAVKGKGEVKHGGEDGRSSSGTPHREKRGGESEDISGVRRGRGHRMPHLSEGTKGRQVGSGGDGERWGSDRGSRGSLNEQIALVLIRLQEDMQNVLQRLHKLETLTASQAKLSWQTSNQPSSQRPSWWPFEMSPGALAFAIIWPFIAQWLVHLYYQRRRRKLN.

Residues 44-133 form the ACB domain; that stretch reads YETRFEAAVK…MKKIIETMPM (90 aa). An acyl-CoA is bound by residues 55–64, 75–79, Lys101, and Tyr120; these read IQSLPKNGSF and YSFYK. The disordered stretch occupies residues 175-217; the sequence is AKAVNGKAESSDSGAESEEEEAQEELKGAEQSGSDDKKMMTKS. Residues 181-209 adopt a coiled-coil conformation; that stretch reads KAESSDSGAESEEEEAQEELKGAEQSGSD. Residues Ser184, Ser185, Ser187, Ser191, Ser206, and Ser233 each carry the phosphoserine modification. Positions 198–217 are enriched in basic and acidic residues; that stretch reads EELKGAEQSGSDDKKMMTKS. 2 disordered regions span residues 234–302 and 345–417; these read FAQD…CDSM and AVKG…RGSR. A compositionally biased stretch (basic and acidic residues) spans 238–257; it reads SDIHTDSSRSARRSEDKKPT. The span at 258-267 shows a compositional bias: polar residues; sequence DQSSQQTGNT. A Phosphoserine modification is found at Ser301. Over residues 348-360 the composition is skewed to basic and acidic residues; the sequence is GKGEVKHGGEDGR. Residue Ser403 is modified to Phosphoserine. Residues 406 to 416 show a composition bias toward basic and acidic residues; it reads DGERWGSDRGS. Residues 426-451 are a coiled coil; the sequence is LVLIRLQEDMQNVLQRLHKLETLTAS. Lys444 carries the post-translational modification N6-acetyllysine. Residues 478–498 form a helical membrane-spanning segment; the sequence is GALAFAIIWPFIAQWLVHLYY.

This sequence belongs to the ATG37 family.

Its subcellular location is the peroxisome membrane. Functionally, acyl-CoA binding protein which acts as the peroxisome receptor for pexophagy but is dispensable for aggrephagy and nonselective autophagy. Binds medium- and long-chain acyl-CoA esters. In Rattus norvegicus (Rat), this protein is Acyl-CoA-binding domain-containing protein 5 (Acbd5).